Consider the following 262-residue polypeptide: Cell division protein ZapD (262 aa).

This sequence belongs to the ZapD family. As to quaternary structure, interacts with FtsZ.

It is found in the cytoplasm. Functionally, cell division factor that enhances FtsZ-ring assembly. Directly interacts with FtsZ and promotes bundling of FtsZ protofilaments, with a reduction in FtsZ GTPase activity. The chain is Cell division protein ZapD from Nitrosomonas europaea (strain ATCC 19718 / CIP 103999 / KCTC 2705 / NBRC 14298).